Consider the following 922-residue polypeptide: Lacticin 481/lactococcin biosynthesis protein LcnDR2 (922 aa).

Could be implicated in the processing or the export process of the lantibiotic lacticin 481/lactococcin DR. This is Lacticin 481/lactococcin biosynthesis protein LcnDR2 (lcnDR2) from Lactococcus lactis subsp. lactis (Streptococcus lactis).